The chain runs to 256 residues: uncharacterized protein (256 aa).

Disordered regions lie at residues 1 to 171 and 185 to 256; these read MARG…QLKH and NGQR…LYND. Residues 14-39 are a coiled coil; sequence KRRSKVQEEEEHVEGSEEEVEEPEQK. 2 stretches are compositionally biased toward acidic residues: residues 21-35 and 64-92; these read EEEE…EVEE and SDDD…DNDE. Over residues 108–129 the composition is skewed to basic and acidic residues; that stretch reads NRGDHESHDDNSDNEEQGDRGN. Positions 192 to 205 are enriched in gly residues; it reads KRGGPPRGSFGQRG. Over residues 219–234 the composition is skewed to basic and acidic residues; sequence RQGDTRDTRDTRDTRL.

This is an uncharacterized protein from Acanthamoeba polyphaga (Amoeba).